We begin with the raw amino-acid sequence, 147 residues long: Ponticulin-like protein C3 (147 aa).

A signal peptide spans 1 to 20 (MKFTKSLLLLIVAVFASSNA). Asn118 carries the GPI-like-anchor amidated asparagine lipid modification. Asn118 carries N-linked (GlcNAc...) asparagine glycosylation. The propeptide at 119–147 (SSESDSSDSTRIGASFALFALALLSMLAL) is removed in mature form.

Belongs to the ponticulin family. The GPI-like-anchor contains a phosphoceramide group, rather than a phosphatidyl group.

It is found in the cell membrane. The polypeptide is Ponticulin-like protein C3 (ponC3) (Dictyostelium discoideum (Social amoeba)).